Here is a 457-residue protein sequence, read N- to C-terminus: Acetylcholine receptor subunit alpha-1-B (457 aa).

The N-terminal stretch at 1 to 20 is a signal peptide; that stretch reads MDYTASCLIFLFIAAGTVFG. Topologically, residues 21–230 are extracellular; sequence TDHETRLIGD…ITYHFVLQRL (210 aa). 2 cysteine pairs are disulfide-bonded: cysteine 148–cysteine 162 and cysteine 212–cysteine 213. Asparagine 161 is a glycosylation site (N-linked (GlcNAc...) asparagine). The next 3 helical transmembrane spans lie at 231 to 255, 263 to 281, and 297 to 316; these read PLYFIVNVIIPCLLFSFLTGLVFYL, MTLSISVLLSLTVFLLVIV, and YMLFTMVFVIASIIITVIVI. Residues 317 to 428 lie on the Cytoplasmic side of the membrane; sequence NTHHRSPSTH…WKFVAMVLDH (112 aa). Residues 429–447 form a helical membrane-spanning segment; the sequence is ILLAVFMTVCVIGTLAVFA.

This sequence belongs to the ligand-gated ion channel (TC 1.A.9) family. Acetylcholine receptor (TC 1.A.9.1) subfamily. Alpha-1/CHRNA1 sub-subfamily. One of the alpha chains that assemble within the acetylcholine receptor, a pentamer of two alpha chains, a beta, a delta, and a gamma or epsilon chains.

The protein localises to the postsynaptic cell membrane. Its subcellular location is the cell membrane. The catalysed reaction is K(+)(in) = K(+)(out). It catalyses the reaction Na(+)(in) = Na(+)(out). In terms of biological role, upon acetylcholine binding, the AChR responds by an extensive change in conformation that affects all subunits and leads to opening of an ion-conducting channel across the plasma membrane. This is Acetylcholine receptor subunit alpha-1-B (chrna1-b) from Xenopus laevis (African clawed frog).